Here is a 392-residue protein sequence, read N- to C-terminus: GDP-mannose transporter (392 aa).

Residues 1–40 (MANKRNEDIELGPAEGRGSTDKDPFLARRSSSQPNRPQQA) form a disordered region. Over 1–55 (MANKRNEDIELGPAEGRGSTDKDPFLARRSSSQPNRPQQAGPFGGYFDKIDHSPG) the chain is Cytoplasmic. The span at 29–38 (RSSSQPNRPQ) shows a compositional bias: polar residues. A helical transmembrane segment spans residues 56–76 (ASIIAYCLSSISMTVVNKYVV). Over 77-80 (SGSE) the chain is Lumenal. A helical membrane pass occupies residues 81–101 (WNLNFFYLAVQSLVCTAAILI). Over 102–121 (CKQLGMFQNLAAFDSTKAKK) the chain is Cytoplasmic. Residues 122–144 (WFPISLLLVGMIYTSTKALQFLS) form a helical membrane-spanning segment. Residues 145 to 149 (VPVYT) are Lumenal-facing. The chain crosses the membrane as a helical span at residues 150-168 (IFKNLTIIVVAYGEVLWFG). Residues 169 to 174 (GSVTPM) lie on the Cytoplasmic side of the membrane. A helical membrane pass occupies residues 175–198 (ALLSFGLMVLSSVIAAWADIQAAV). At 199–213 (EGVGHTAEATDAIST) the chain is on the lumenal side. A helical membrane pass occupies residues 214–234 (LNAGYAWMGMNVFCTAAYLLG). Residues 235–248 (MRKVIKKMNFKDYD) are Cytoplasmic-facing. A helical membrane pass occupies residues 249–269 (TMFYNNLLTIPVLIVFSLLFE). Residues 270–287 (DWSNDNLIKNFPVETRNS) are Lumenal-facing. Residues 288-308 (LFIGMIYSGLAAIFISYCSAW) form a helical membrane-spanning segment. Residues 309–316 (CIRVTSST) lie on the Cytoplasmic side of the membrane. A helical transmembrane segment spans residues 317–337 (TYSMVGALNKLPLAISGLIFF). Topologically, residues 338 to 342 (DAPVT) are lumenal. A helical transmembrane segment spans residues 343–361 (FGSVTAIFVGFVSGLVYTW). Topologically, residues 362–392 (SKTRQKVSQILPTTQPTMSASAASNRDAANA) are cytoplasmic.

This sequence belongs to the TPT transporter family. SLC35D subfamily. In terms of assembly, homooligomer.

The protein localises to the golgi apparatus membrane. Its subcellular location is the cytoplasmic vesicle membrane. The protein resides in the endoplasmic reticulum membrane. Functionally, involved in the import of GDP-mannose from the cytoplasm into the Golgi lumen. This is GDP-mannose transporter (vrg-4) from Neurospora crassa (strain ATCC 24698 / 74-OR23-1A / CBS 708.71 / DSM 1257 / FGSC 987).